The primary structure comprises 102 residues: Large ribosomal subunit protein uL24 (102 aa).

The protein belongs to the universal ribosomal protein uL24 family. Part of the 50S ribosomal subunit.

One of two assembly initiator proteins, it binds directly to the 5'-end of the 23S rRNA, where it nucleates assembly of the 50S subunit. In terms of biological role, one of the proteins that surrounds the polypeptide exit tunnel on the outside of the subunit. The protein is Large ribosomal subunit protein uL24 of Ralstonia pickettii (strain 12J).